Consider the following 164-residue polypeptide: C-phycoerythrin alpha chain (164 aa).

C82 and C139 together coordinate (2R,3E)-phycoerythrobilin.

It belongs to the phycobiliprotein family. Heterodimer of an alpha and a beta chain. Post-translationally, contains two covalently linked bilin chromophores.

It is found in the cellular thylakoid membrane. Light-harvesting photosynthetic bile pigment-protein from the phycobiliprotein complex. This Pseudanabaena tenuis (strain PCC 7409) protein is C-phycoerythrin alpha chain (cpeA).